Consider the following 285-residue polypeptide: MKAKPLSNDPGSKRYAYRVNKEENRKELKHVKIDESSLVEGHQVDLPKKRFYRQRAHSNPFSDHQLEYPGSPEEMDWTKLYPHYVDPESGKMTKKVTIADIGCGFGGLLVDLSPEFPDDLILGMEIRVQVTNYVEDRIIALRTNHVKEQGYQNINVLRGNAMKFLPNFFQKGQLSKMFFCFPDPHFKQRKHKARIITNTLLSEYAYVLREGGIVYTITDVKDLHDWMVKHLTEHPLFERLPEEWEEEDSCVRIMRHATEEGKKVERKKGDKFVACFRRLPTPEII.

S-adenosyl-L-methionine is bound by residues Gly-102, 125 to 126 (EI), 160 to 161 (NA), and Cys-180. Asp-183 is a catalytic residue. An S-adenosyl-L-methionine-binding site is contributed by 258-260 (TEE).

Belongs to the class I-like SAM-binding methyltransferase superfamily. TrmB family. Forms a complex with TRM82.

Its subcellular location is the nucleus. It catalyses the reaction guanosine(46) in tRNA + S-adenosyl-L-methionine = N(7)-methylguanosine(46) in tRNA + S-adenosyl-L-homocysteine. The protein operates within tRNA modification; N(7)-methylguanine-tRNA biosynthesis. Its function is as follows. Catalyzes the formation of N(7)-methylguanine at position 46 (m7G46) in tRNA. The protein is tRNA (guanine-N(7)-)-methyltransferase of Candida glabrata (strain ATCC 2001 / BCRC 20586 / JCM 3761 / NBRC 0622 / NRRL Y-65 / CBS 138) (Yeast).